The sequence spans 208 residues: Ribosomal RNA large subunit methyltransferase E (208 aa).

S-adenosyl-L-methionine-binding residues include G62, W64, D82, D98, and D123. K163 serves as the catalytic Proton acceptor.

The protein belongs to the class I-like SAM-binding methyltransferase superfamily. RNA methyltransferase RlmE family.

It is found in the cytoplasm. It catalyses the reaction uridine(2552) in 23S rRNA + S-adenosyl-L-methionine = 2'-O-methyluridine(2552) in 23S rRNA + S-adenosyl-L-homocysteine + H(+). Its function is as follows. Specifically methylates the uridine in position 2552 of 23S rRNA at the 2'-O position of the ribose in the fully assembled 50S ribosomal subunit. This is Ribosomal RNA large subunit methyltransferase E from Actinobacillus pleuropneumoniae serotype 5b (strain L20).